The chain runs to 120 residues: Large ribosomal subunit protein uL18 (120 aa).

This sequence belongs to the universal ribosomal protein uL18 family. In terms of assembly, part of the 50S ribosomal subunit; part of the 5S rRNA/L5/L18/L25 subcomplex. Contacts the 5S and 23S rRNAs.

In terms of biological role, this is one of the proteins that bind and probably mediate the attachment of the 5S RNA into the large ribosomal subunit, where it forms part of the central protuberance. The chain is Large ribosomal subunit protein uL18 from Nitrobacter hamburgensis (strain DSM 10229 / NCIMB 13809 / X14).